A 500-amino-acid chain; its full sequence is Coiled-coil domain-containing protein 125 (500 aa).

Residues 1–105 (MSKVPRSSSE…TDSNSELSDE (105 aa)) form a disordered region. A compositionally biased stretch (acidic residues) spans 10–23 (EAEDIWETEDDMTE). Residues 92 to 101 (RLSSTDSNSE) are compositionally biased toward polar residues. Coiled-coil stretches lie at residues 101-237 (ELSD…LEAL) and 286-314 (STRK…TADA). Position 492 is a phosphoserine (S492).

In terms of tissue distribution, expressed in many tissues, with highest levels in spleen, thymus and bone marrow.

The protein resides in the cytoplasm. May be involved in the regulation of cell migration. This is Coiled-coil domain-containing protein 125 (Ccdc125) from Mus musculus (Mouse).